Here is a 587-residue protein sequence, read N- to C-terminus: Cyclic GMP-AMP synthase-like receptor (587 aa).

Disordered regions lie at residues I26–D48 and T77–L229. Basic and acidic residues-rich tracts occupy residues T95–L138, D150–L185, and P204–P228. The Mg(2+) site is built by E307, D309, and D409.

Belongs to the mab-21 family. Requires Mg(2+) as cofactor. The cofactor is Mn(2+).

The catalysed reaction is UTP + ATP = 2',3'-cUAMP + 2 diphosphate. Functionally, nucleotidyltransferase that catalyzes the formation of cyclic UMP-AMP (2',3'-cUAMP) from ATP and UTP and plays a key role in innate immunity. Acts as a key sensor of double-stranded DNA (dsDNA), the presence of dsDNA in the cytoplasm being a danger signal that triggers the immune responses. Directly binds dsDNA, activating the nucleotidyltransferase activity, leading to synthesis of 2',3'-cUAMP, a second messenger that binds to and activates Sting, thereby triggering the immune response via activation of the NF-kappa-B transcription factor. The protein is Cyclic GMP-AMP synthase-like receptor of Magallana gigas (Pacific oyster).